We begin with the raw amino-acid sequence, 444 residues long: NADH-quinone oxidoreductase subunit F (444 aa).

Residue 61-70 (GRGGAGFSTG) participates in NAD(+) binding. 176–223 (GAGRYICGEETALINSLEGRRANPRSKPPFPAVFGLWGKPTCVNNVET) contributes to the FMN binding site. [4Fe-4S] cluster is bound by residues Cys-353, Cys-356, Cys-359, and Cys-400.

The protein belongs to the complex I 51 kDa subunit family. In terms of assembly, composed of 13 different subunits. Subunits NuoCD, E, F, and G constitute the peripheral sector of the complex. The cofactor is FMN. It depends on [4Fe-4S] cluster as a cofactor.

It catalyses the reaction a quinone + NADH + 5 H(+)(in) = a quinol + NAD(+) + 4 H(+)(out). Its function is as follows. NDH-1 shuttles electrons from NADH, via FMN and iron-sulfur (Fe-S) centers, to quinones in the respiratory chain. Couples the redox reaction to proton translocation (for every two electrons transferred, four hydrogen ions are translocated across the cytoplasmic membrane), and thus conserves the redox energy in a proton gradient. In Buchnera aphidicola subsp. Acyrthosiphon pisum (strain APS) (Acyrthosiphon pisum symbiotic bacterium), this protein is NADH-quinone oxidoreductase subunit F (nuoF).